We begin with the raw amino-acid sequence, 420 residues long: Transmembrane protease serine 11B-like protein (420 aa).

The Cytoplasmic portion of the chain corresponds to 1–19; the sequence is MTVSKLRPVIASRKSFPPW. The helical; Signal-anchor for type II membrane protein transmembrane segment at 20 to 40 threads the bilayer; sequence MIILGVLGVLAILGLIIGLLV. Topologically, residues 41 to 420 are extracellular; it reads HFLAVENKIY…RDWIASKTGI (380 aa). Residues 48 to 165 form the SEA domain; the sequence is KIYYYQGSFK…GSLKLTEITK (118 aa). 2 N-linked (GlcNAc...) asparagine glycosylation sites follow: Asn111 and Asn146. One can recognise a Peptidase S1 domain in the interval 189-419; that stretch reads ITGGSTAQKG…YRDWIASKTG (231 aa). Residues Cys214 and Cys230 are joined by a disulfide bond. Catalysis depends on His229, which acts as the Charge relay system. The N-linked (GlcNAc...) asparagine glycan is linked to Asn239. Catalysis depends on Asp274, which acts as the Charge relay system. Disulfide bonds link Cys339–Cys355 and Cys366–Cys395. The active-site Charge relay system is Ser370.

Belongs to the peptidase S1 family.

It localises to the membrane. The protein resides in the cell membrane. Inhibited by aprotinin, leupeptin, benzamidine, SERPINA1, SPINT1 and SPINT2. In terms of biological role, serine protease. In Rattus norvegicus (Rat), this protein is Transmembrane protease serine 11B-like protein (Tmprss11bnl).